The sequence spans 29 residues: Glucagon (29 aa).

Belongs to the glucagon family.

The protein resides in the secreted. Its function is as follows. Glucagon plays a key role in glucose metabolism and homeostasis. Regulates blood glucose by increasing gluconeogenesis and decreasing glycolysis. The chain is Glucagon (GCG) from Meleagris gallopavo (Wild turkey).